The chain runs to 400 residues: Na(+)/H(+) antiporter NhaA (400 aa).

11 helical membrane passes run Ala26 to Leu46, Leu71 to Val91, Ile107 to Ile127, Gly137 to Ser157, Ile166 to Phe186, His189 to Leu209, Ala225 to Ile245, Phe273 to Val293, Pro299 to Phe319, Ile340 to Leu360, and Leu373 to Leu393.

Belongs to the NhaA Na(+)/H(+) (TC 2.A.33) antiporter family.

The protein resides in the cell inner membrane. It carries out the reaction Na(+)(in) + 2 H(+)(out) = Na(+)(out) + 2 H(+)(in). In terms of biological role, na(+)/H(+) antiporter that extrudes sodium in exchange for external protons. This Haemophilus influenzae (strain ATCC 51907 / DSM 11121 / KW20 / Rd) protein is Na(+)/H(+) antiporter NhaA.